We begin with the raw amino-acid sequence, 355 residues long: Aurora kinase (355 aa).

The 252-residue stretch at 89 to 340 folds into the Protein kinase domain; that stretch reads FEIGKPLGKG…LEQVMRHPWI (252 aa). Residues 95–103 and Lys118 each bind ATP; that span reads LGKGKFGRV. The Proton acceptor role is filled by Asp212.

This sequence belongs to the protein kinase superfamily. Ser/Thr protein kinase family. Aurora subfamily. Component of the CPC complex at least composed of ark1, bir1 and pic1. Interacts with the mitotic checkpoint complex (MCC) subunit mad3.

It is found in the nucleus. The protein resides in the cytoplasm. The protein localises to the cytoskeleton. Its subcellular location is the spindle. The catalysed reaction is L-seryl-[protein] + ATP = O-phospho-L-seryl-[protein] + ADP + H(+). It catalyses the reaction L-threonyl-[protein] + ATP = O-phospho-L-threonyl-[protein] + ADP + H(+). Component of the chromosomal passenger complex (CPC), a complex that acts as a key regulator of chromosome segregation and cytokinesis. Has a role in error-correction of aberrent kinetochore-microtubule attachments to ensure that sister kinetochores become bioriented and connect to opposite poles by promoting spindle assembly checkpoint signaling. Ark1 is also required for phosphorylation of histone H3 that accompanies chromosome condensation and condensin recruitment to mitotic chromatin. The protein is Aurora kinase (ark1) of Schizosaccharomyces pombe (strain 972 / ATCC 24843) (Fission yeast).